We begin with the raw amino-acid sequence, 42 residues long: Photosystem I reaction center subunit IX (42 aa).

Residues 7 to 27 (YLSAAPVLSTLWLGALAALLI) form a helical membrane-spanning segment.

This sequence belongs to the PsaJ family.

Its subcellular location is the plastid membrane. Functionally, may help in the organization of the PsaE and PsaF subunits. The protein is Photosystem I reaction center subunit IX of Cuscuta reflexa (Southern Asian dodder).